We begin with the raw amino-acid sequence, 128 residues long: MDADDFGKKDLENGNESPKKPIFMKDWKNSQPNEQGRWLHLDARMNRNIEDLEISNYNLRLMNEQLESQLLSLNVKPVVSFAEQGKSSESKTDEEGFILNSASNVLDNFISIVNELVQHAEDVLDDLG.

Residues 1-28 are compositionally biased toward basic and acidic residues; the sequence is MDADDFGKKDLENGNESPKKPIFMKDWK. Residues 1 to 30 are disordered; the sequence is MDADDFGKKDLENGNESPKKPIFMKDWKNS.

Its subcellular location is the cytoplasm. The protein localises to the nucleus. This is an uncharacterized protein from Schizosaccharomyces pombe (strain 972 / ATCC 24843) (Fission yeast).